The sequence spans 103 residues: Large ribosomal subunit protein uL24 (103 aa).

This sequence belongs to the universal ribosomal protein uL24 family. In terms of assembly, part of the 50S ribosomal subunit.

Functionally, one of two assembly initiator proteins, it binds directly to the 5'-end of the 23S rRNA, where it nucleates assembly of the 50S subunit. Its function is as follows. One of the proteins that surrounds the polypeptide exit tunnel on the outside of the subunit. This chain is Large ribosomal subunit protein uL24, found in Bacillus licheniformis (strain ATCC 14580 / DSM 13 / JCM 2505 / CCUG 7422 / NBRC 12200 / NCIMB 9375 / NCTC 10341 / NRRL NRS-1264 / Gibson 46).